A 295-amino-acid chain; its full sequence is Bifunctional protein FolD (295 aa).

NADP(+) contacts are provided by residues 165-167, S190, and I231; that span reads GRS.

This sequence belongs to the tetrahydrofolate dehydrogenase/cyclohydrolase family. Homodimer.

The catalysed reaction is (6R)-5,10-methylene-5,6,7,8-tetrahydrofolate + NADP(+) = (6R)-5,10-methenyltetrahydrofolate + NADPH. It catalyses the reaction (6R)-5,10-methenyltetrahydrofolate + H2O = (6R)-10-formyltetrahydrofolate + H(+). The protein operates within one-carbon metabolism; tetrahydrofolate interconversion. Its function is as follows. Catalyzes the oxidation of 5,10-methylenetetrahydrofolate to 5,10-methenyltetrahydrofolate and then the hydrolysis of 5,10-methenyltetrahydrofolate to 10-formyltetrahydrofolate. This is Bifunctional protein FolD from Nitrosomonas europaea (strain ATCC 19718 / CIP 103999 / KCTC 2705 / NBRC 14298).